Reading from the N-terminus, the 563-residue chain is Arginine--tRNA ligase (563 aa).

A 'HIGH' region motif is present at residues 120–130 (PNIAKPFHIGH).

This sequence belongs to the class-I aminoacyl-tRNA synthetase family. In terms of assembly, monomer.

The protein resides in the cytoplasm. It carries out the reaction tRNA(Arg) + L-arginine + ATP = L-arginyl-tRNA(Arg) + AMP + diphosphate. In Clostridium botulinum (strain 657 / Type Ba4), this protein is Arginine--tRNA ligase.